A 238-amino-acid chain; its full sequence is Probable septum site-determining protein MinC (238 aa).

The protein belongs to the MinC family. As to quaternary structure, interacts with MinD and FtsZ.

Functionally, cell division inhibitor that blocks the formation of polar Z ring septums. Rapidly oscillates between the poles of the cell to destabilize FtsZ filaments that have formed before they mature into polar Z rings. Prevents FtsZ polymerization. This Blochmanniella floridana protein is Probable septum site-determining protein MinC.